A 398-amino-acid chain; its full sequence is MTGTRILELFGPAPEPPSELGRYRILSPTAGIRVSPLQLGALSIGDAWSTDLGSMDKDSAMELLDAYAAAGGNFIDTANAYQNEQSEMWIGEWMASRGNRDKMVIATKFGTDYRAHELGKGLAVNYSGNHKRSLHMSVRDSLQKLRTSWIDILYLHTWDYTTSIPELMDSLHHLVQRGDVLYLGICNTPAWVVSAANTYAQQQGKTQFSVYQGRWNPLRRELERDILPMARHFGMAVTVYDALGSGKFQSRDMLARRKDQGEGLRAIYGGQQTALEEAMSKALGVVAAQHGIESVTAVALAYLLAKAPYVFPIIGGRKIQHLHDNIEALSLRLSQEEIEYLESVGDFDPGFPYDMAGVDPADTGIATPIVAQAAPMAFVQRSKAIGYAESSKGSQMFG.

Asp76 is an NADP(+) binding site. The active-site Proton donor is Tyr81. His156 contacts substrate. NADP(+) contacts are provided by residues Cys186–Asn187, Gln212, Asp241–Arg251, and Arg317–Asn325.

The protein belongs to the aldo/keto reductase family. Aldo/keto reductase 2 subfamily. Homodimer.

It functions in the pathway secondary metabolite biosynthesis; terpenoid biosynthesis. Aldo-keto reductase; part of the gene cluster B that mediates the biosynthesis of austinol and dehydroaustinol, two fungal meroterpenoids. The first step of the pathway is the synthesis of 3,5-dimethylorsellinic acid by the polyketide synthase ausA. 3,5-dimethylorsellinic acid is then prenylated by the polyprenyl transferase ausN. Further epoxidation by the FAD-dependent monooxygenase ausM and cyclization by the probable terpene cyclase ausL lead to the formation of protoaustinoid A. Protoaustinoid A is then oxidized to spiro-lactone preaustinoid A3 by the combined action of the FAD-binding monooxygenases ausB and ausC, and the dioxygenase ausE. Acid-catalyzed keto-rearrangement and ring contraction of the tetraketide portion of preaustinoid A3 by ausJ lead to the formation of preaustinoid A4. The aldo-keto reductase ausK, with the help of ausH, is involved in the next step by transforming preaustinoid A4 into isoaustinone which is in turn hydroxylated by the P450 monooxygenase ausI to form austinolide. Finally, the cytochrome P450 monooxygenase ausG modifies austinolide to austinol. Austinol can be further modified to dehydroaustinol which forms a diffusible complex with diorcinol that initiates conidiation. Due to genetic rearrangements of the clusters and the subsequent loss of some enzymes, the end products of the Emericella nidulans austinoid biosynthesis clusters are austinol and dehydroaustinol, even if additional enzymes, such as the O-acetyltransferase ausQ and the cytochrome P450 monooxygenase ausR are still functional. This chain is Aldo-keto reductase ausK, found in Emericella nidulans (strain FGSC A4 / ATCC 38163 / CBS 112.46 / NRRL 194 / M139) (Aspergillus nidulans).